The chain runs to 210 residues: Fimbriae Z protein (210 aa).

The Response regulatory domain maps to 5-121 (SVIIMDTHPI…DIFHAVQMIL (117 aa)). Asp56 is subject to 4-aspartylphosphate. The 66-residue stretch at 143 to 208 (NSSTVTVLSN…ELIDYAKLYE (66 aa)) folds into the HTH luxR-type domain. A DNA-binding region (H-T-H motif) is located at residues 167-186 (NKEIADKLLLSNKTVSAHKS).

The protein resides in the cytoplasm. This chain is Fimbriae Z protein (fimZ), found in Escherichia coli O157:H7.